Here is a 434-residue protein sequence, read N- to C-terminus: MKVDLSITAVKAREILDSRGNPTVEVEVVVNDEFVGRAAVPSGASTGIFEAVELRDGDKKRYMGKGVLKAVENVNEVIAPEIIGMNALNQVEIDKLMIELDGTENKSKLGANAILGVSLAVAKAAANALGLPLYQYIGGVNAKYLPVPMMNILNGGKHADNSVDLQEFMIMPVGAKSFSEALRMCAETFHHLRNVLKARGYNTTVGDEGGFAPNLKSNEEPLEVIVEAIEKAGYTPGKDIAIALDPATSELYNEEDGKYYFEREGKVRTKEEMVEFWVKLVEKYPIVSIEDGVAEEDWEGWKMLTEALGNKIQLVGDDLFVTNTKRLAKGIELGVANSILIKLNQIGTLTETLEAIEMANRAGYTAVVSHRSGETEDTTIADLVVAVNAGQIKTGAPSRTDRVAKYNQLLRIEEELGSVAVYPGMNAFFNLKKK.

A (2R)-2-phosphoglycerate-binding site is contributed by Gln166. Residue Glu208 is the Proton donor of the active site. Asp245, Glu290, and Asp317 together coordinate Mg(2+). (2R)-2-phosphoglycerate-binding residues include Lys342, Arg371, Ser372, and Lys393. The active-site Proton acceptor is the Lys342.

This sequence belongs to the enolase family. Requires Mg(2+) as cofactor.

The protein resides in the cytoplasm. The protein localises to the secreted. It is found in the cell surface. The enzyme catalyses (2R)-2-phosphoglycerate = phosphoenolpyruvate + H2O. It functions in the pathway carbohydrate degradation; glycolysis; pyruvate from D-glyceraldehyde 3-phosphate: step 4/5. Its function is as follows. Catalyzes the reversible conversion of 2-phosphoglycerate (2-PG) into phosphoenolpyruvate (PEP). It is essential for the degradation of carbohydrates via glycolysis. The polypeptide is Enolase (Caldicellulosiruptor bescii (strain ATCC BAA-1888 / DSM 6725 / KCTC 15123 / Z-1320) (Anaerocellum thermophilum)).